The sequence spans 88 residues: U13-theraphotoxin-Cg1a (88 aa).

An N-terminal signal peptide occupies residues 1 to 21 (MKVSVLITLAVLGVMFVWASA). A propeptide spanning residues 22 to 52 (AELEQSGSDQKDSDSPAWLKSMERIFQSEER) is cleaved from the precursor. 3 disulfides stabilise this stretch: C54/C68, C61/C73, and C67/C80.

This sequence belongs to the neurotoxin 10 (Hwtx-1) family. 41 (Jztx-36) subfamily. As to expression, expressed by the venom gland.

The protein localises to the secreted. In terms of biological role, probable ion channel inhibitor. This is U13-theraphotoxin-Cg1a from Chilobrachys guangxiensis (Chinese earth tiger tarantula).